A 290-amino-acid polypeptide reads, in one-letter code: Glycine--tRNA ligase alpha subunit (290 aa).

The protein belongs to the class-II aminoacyl-tRNA synthetase family. In terms of assembly, tetramer of two alpha and two beta subunits.

The protein resides in the cytoplasm. It carries out the reaction tRNA(Gly) + glycine + ATP = glycyl-tRNA(Gly) + AMP + diphosphate. In Brachyspira hyodysenteriae (strain ATCC 49526 / WA1), this protein is Glycine--tRNA ligase alpha subunit.